Consider the following 122-residue polypeptide: Large ribosomal subunit protein uL14 (122 aa).

This sequence belongs to the universal ribosomal protein uL14 family. As to quaternary structure, part of the 50S ribosomal subunit. Forms a cluster with proteins L3 and L19. In the 70S ribosome, L14 and L19 interact and together make contacts with the 16S rRNA in bridges B5 and B8.

Binds to 23S rRNA. Forms part of two intersubunit bridges in the 70S ribosome. This chain is Large ribosomal subunit protein uL14, found in Alcanivorax borkumensis (strain ATCC 700651 / DSM 11573 / NCIMB 13689 / SK2).